Reading from the N-terminus, the 218-residue chain is LHFPL tetraspan subfamily member 3 protein (218 aa).

Helical transmembrane passes span 22–42 (IGVL…VCFI), 96–116 (FFIG…GLFF), 126–146 (ICAW…MIFP), and 177–197 (ILAI…FVLG).

Belongs to the LHFP family.

It localises to the membrane. The sequence is that of LHFPL tetraspan subfamily member 3 protein from Xenopus laevis (African clawed frog).